The chain runs to 941 residues: Zinc finger protein 507 (941 aa).

Ser-95 carries the phosphoserine modification. 2 C2H2-type zinc fingers span residues 122-144 (YQCS…VKQH) and 152-175 (LMCS…VSEH). Residues 165–177 (QELEAHVVSEHEN) are compositionally biased toward basic and acidic residues. The disordered stretch occupies residues 165–198 (QELEAHVVSEHENSASSQARSSPSGQGATERKSE). Residues 178–192 (SASSQARSSPSGQGA) show a composition bias toward low complexity. The C2H2-type 3 zinc finger occupies 237–259 (YRCLFCSYTCGQQRMLKTHAWKH). A Phosphoserine modification is found at Ser-415. The segment at 455–477 (ELSKGLAPDENAPPGRRRTNSES) is disordered. C2H2-type zinc fingers lie at residues 630–652 (YRCR…LRVH), 658–680 (YQCP…MINH), 686–709 (HQCK…REQH), 746–768 (YRCD…RRVH), and 774–796 (YRCS…MWKH). Residues 823–856 (GKSRGKPLLTSSEERTGPTTGSPENLVSSSELTS) form a disordered region. Residues 839-856 (GPTTGSPENLVSSSELTS) are compositionally biased toward polar residues. The C2H2-type 9 zinc-finger motif lies at 899–921 (FCCCICGFESTSKESLLDHMKEH).

This sequence belongs to the krueppel C2H2-type zinc-finger protein family.

It is found in the nucleus. Its function is as follows. May be involved in transcriptional regulation. This Mus musculus (Mouse) protein is Zinc finger protein 507 (Znf507).